The following is a 589-amino-acid chain: 5'-AMP-activated protein kinase catalytic subunit alpha-1 (589 aa).

In terms of domain architecture, Protein kinase spans 24-276 (FVIKETIGKG…VKRIVNHSWF (253 aa)). ATP contacts are provided by residues 30-38 (IGKGAFGAV) and lysine 53. Aspartate 147 (proton acceptor) is an active-site residue.

Belongs to the protein kinase superfamily. CAMK Ser/Thr protein kinase family. SNF1 subfamily.

The enzyme catalyses L-seryl-[protein] + ATP = O-phospho-L-seryl-[protein] + ADP + H(+). It catalyses the reaction L-threonyl-[protein] + ATP = O-phospho-L-threonyl-[protein] + ADP + H(+). In terms of biological role, probably does not act as a sensor that couples lifespan to information about energy levels and insulin-like signals. Together with aak-2, involved in the establishment of germline stem cell (GSC) quiescence during dauer development. Plays a role in the maintenance of glycogen stores which are necessary for resistance to hyperosmotic stress. The sequence is that of 5'-AMP-activated protein kinase catalytic subunit alpha-1 (aak-1) from Caenorhabditis elegans.